Reading from the N-terminus, the 254-residue chain is Caffeoyl-CoA O-methyltransferase (254 aa).

Residues 1-25 form a disordered region; the sequence is MATTNVEENKQTQEQQPKEIKHQEV. Over residues 7 to 25 the composition is skewed to basic and acidic residues; that stretch reads EENKQTQEQQPKEIKHQEV. Lys28 is a binding site for substrate. S-adenosyl-L-methionine contacts are provided by residues Thr70, Glu92, 94–95, Ser100, Asp118, and Ala147; that span reads GV. A substrate-binding site is contributed by Asp170. A divalent metal cation is bound at residue Asp170. Asp172 provides a ligand contact to S-adenosyl-L-methionine. Residues Asp196 and Asn197 each coordinate a divalent metal cation. Asn201 is a binding site for substrate.

This sequence belongs to the class I-like SAM-binding methyltransferase superfamily. Cation-dependent O-methyltransferase family. CCoAMT subfamily. Requires a divalent metal cation as cofactor.

It carries out the reaction (E)-caffeoyl-CoA + S-adenosyl-L-methionine = (E)-feruloyl-CoA + S-adenosyl-L-homocysteine + H(+). It functions in the pathway aromatic compound metabolism; phenylpropanoid biosynthesis. In terms of biological role, methylates caffeoyl-CoA to feruloyl-CoA and 5-hydroxyferuloyl-CoA to sinapoyl-CoA. Plays a role in the synthesis of feruloylated polysaccharides. Involved in the reinforcement of the plant cell wall. Also involved in the responding to wounding or pathogen challenge by the increased formation of cell wall-bound ferulic acid polymers. The protein is Caffeoyl-CoA O-methyltransferase of Mesembryanthemum crystallinum (Common ice plant).